The following is a 325-amino-acid chain: Aldo-keto reductase family 1 member D1 (325 aa).

NADP(+) is bound by residues 22-26 (GLGTY) and D52. Y26 contacts substrate. The substrate site is built by Y57, W88, E119, and Y131. The Proton donor role is filled by Y57. Residues 168–169 (SN), Q192, and 218–223 (HSPLGT) each bind NADP(+). The residue at position 228 (S228) is a Phosphoserine. W229 contributes to the substrate binding site. 272-282 (KSFTPERIKEN) serves as a coordination point for NADP(+).

This sequence belongs to the aldo/keto reductase family.

It is found in the cytoplasm. The catalysed reaction is 5beta-cholestan-3-one + NADP(+) = cholest-4-en-3-one + NADPH + H(+). The enzyme catalyses 4,5beta-dihydrocortisone + NADP(+) = cortisone + NADPH + H(+). It carries out the reaction cortisol + NADPH + H(+) = 5beta-dihydrocortisol + NADP(+). It catalyses the reaction corticosterone + NADPH + H(+) = 5beta-dihydrocorticosterone + NADP(+). The catalysed reaction is 7alpha,12alpha-dihydroxycholest-4-en-3-one + NADPH + H(+) = 7alpha,12alpha-dihydroxy-5beta-cholestan-3-one + NADP(+). The enzyme catalyses 7alpha-hydroxycholest-4-en-3-one + NADPH + H(+) = 7alpha-hydroxy-5beta-cholestan-3-one + NADP(+). It carries out the reaction epitestosterone + NADPH + H(+) = 5beta-dihydroepitestosterone + NADP(+). It catalyses the reaction androst-4-ene-3,17-dione + NADPH + H(+) = 5beta-androstane-3,17-dione + NADP(+). The catalysed reaction is progesterone + NADPH + H(+) = 5beta-pregnan-3,20-dione + NADP(+). The enzyme catalyses 21-hydroxyprogesterone + NADPH + H(+) = 5beta-dihydrodeoxycorticosterone + NADP(+). It carries out the reaction aldosterone + NADPH + H(+) = 5beta-dihydroaldosterone + NADP(+). It catalyses the reaction 17beta-hydroxyandrosta-1,4-dien-3-one + NADPH + H(+) = 17beta-hydroxy-5beta-androst-1-en-3-one + NADP(+). The catalysed reaction is 17beta-hydroxyestr-4-en-3-one + NADPH + H(+) = 17beta-hydroxy-5beta-estran-3-one + NADP(+). The enzyme catalyses 5beta-dihydrotestosterone + NADP(+) = testosterone + NADPH + H(+). It carries out the reaction androst-4-ene-3,11,17-trione + NADPH + H(+) = 17beta-hydroxyandrost-4-ene-3,11-dione + NADP(+). Subject to inhibition by high substrate concentrations. Inhibited by testosterone concentrations above 10 uM. Inhibited by the primary and secondary bile acids chenodeoxycholic acid and ursodeoxycholic acid. Catalyzes the stereospecific NADPH-dependent reduction of the C4-C5 double bond of bile acid intermediates and steroid hormones carrying a delta(4)-3-one structure to yield an A/B cis-ring junction. This cis-configuration is crucial for bile acid biosynthesis and plays important roles in steroid metabolism. Capable of reducing a broad range of delta-(4)-3-ketosteroids from C18 (such as, 17beta-hydroxyestr-4-en-3-one) to C27 (such as, 7alpha-hydroxycholest-4-en-3-one). This chain is Aldo-keto reductase family 1 member D1 (Akr1d1), found in Mus musculus (Mouse).